The primary structure comprises 400 residues: Formate-dependent phosphoribosylglycinamide formyltransferase (400 aa).

N(1)-(5-phospho-beta-D-ribosyl)glycinamide contacts are provided by residues 22-23 (EL) and E82. ATP-binding positions include R115, K156, 161 to 166 (SSGKGQ), 196 to 199 (EGFI), and E204. Residues 120-309 (RLAAETLGLP…EFALHARAIL (190 aa)) form the ATP-grasp domain. Mg(2+) contacts are provided by E268 and E280. N(1)-(5-phospho-beta-D-ribosyl)glycinamide contacts are provided by residues D287, K361, and 368–369 (RR).

The protein belongs to the PurK/PurT family. As to quaternary structure, homodimer.

The enzyme catalyses N(1)-(5-phospho-beta-D-ribosyl)glycinamide + formate + ATP = N(2)-formyl-N(1)-(5-phospho-beta-D-ribosyl)glycinamide + ADP + phosphate + H(+). The protein operates within purine metabolism; IMP biosynthesis via de novo pathway; N(2)-formyl-N(1)-(5-phospho-D-ribosyl)glycinamide from N(1)-(5-phospho-D-ribosyl)glycinamide (formate route): step 1/1. Its function is as follows. Involved in the de novo purine biosynthesis. Catalyzes the transfer of formate to 5-phospho-ribosyl-glycinamide (GAR), producing 5-phospho-ribosyl-N-formylglycinamide (FGAR). Formate is provided by PurU via hydrolysis of 10-formyl-tetrahydrofolate. This Xanthomonas oryzae pv. oryzae (strain PXO99A) protein is Formate-dependent phosphoribosylglycinamide formyltransferase.